The sequence spans 70 residues: DNA-directed RNA polymerase subunit omega (70 aa).

It belongs to the RNA polymerase subunit omega family. As to quaternary structure, the RNAP catalytic core consists of 2 alpha, 1 beta, 1 beta' and 1 omega subunit. When a sigma factor is associated with the core the holoenzyme is formed, which can initiate transcription.

It carries out the reaction RNA(n) + a ribonucleoside 5'-triphosphate = RNA(n+1) + diphosphate. Its function is as follows. Promotes RNA polymerase assembly. Latches the N- and C-terminal regions of the beta' subunit thereby facilitating its interaction with the beta and alpha subunits. The protein is DNA-directed RNA polymerase subunit omega of Methylobacillus flagellatus (strain ATCC 51484 / DSM 6875 / VKM B-1610 / KT).